Consider the following 326-residue polypeptide: Peroxidase 43 (326 aa).

Positions 1 to 24 (MVWANAKMRLALSLVTVFFGISLA) are cleaved as a signal peptide. Intrachain disulfides connect C35–C112, C68–C73, C118–C322, and C196–C228. Catalysis depends on H66, which acts as the Proton acceptor. Ca(2+)-binding residues include D67, V70, G72, D74, and S76. The N-linked (GlcNAc...) asparagine glycan is linked to N151. P159 serves as a coordination point for substrate. H189 contacts heme b. T190 is a binding site for Ca(2+). The Ca(2+) site is built by D241, S244, and D249.

It belongs to the peroxidase family. Classical plant (class III) peroxidase subfamily. Heme b serves as cofactor. The cofactor is Ca(2+).

The protein localises to the secreted. It carries out the reaction 2 a phenolic donor + H2O2 = 2 a phenolic radical donor + 2 H2O. Functionally, removal of H(2)O(2), oxidation of toxic reductants, biosynthesis and degradation of lignin, suberization, auxin catabolism, response to environmental stresses such as wounding, pathogen attack and oxidative stress. These functions might be dependent on each isozyme/isoform in each plant tissue. The protein is Peroxidase 43 (PER43) of Arabidopsis thaliana (Mouse-ear cress).